The following is a 429-amino-acid chain: Serine/threonine-protein kinase BGLF4 (429 aa).

The tract at residues 1–27 is disordered; sequence MDVNMAAELSPTNSSSSGELSVSPEPP. Positions 1–409 constitute a Protein kinase domain; the sequence is MDVNMAAELS…CRPRFEHPHL (409 aa). The segment covering 14–23 has biased composition (low complexity); that stretch reads SSSSGELSVS. The segment at 36–40 is SUMO interaction motif; sequence KVTVI. Residues 110 to 118 and Glu-128 contribute to the ATP site; that span reads LYHELMVCD. Catalysis depends on Asp-195, which acts as the Proton acceptor. The interval 344-350 is SUMO interaction motif; sequence VVLLEVL.

This sequence belongs to the protein kinase superfamily. Ser/Thr protein kinase family. In terms of assembly, interacts with host NUP62 and NUP153; this interaction plays a role in nuclear targeting of BGLF4. Interacts with host SUMO1 and SUMO2.

The protein localises to the virion tegument. The protein resides in the host nucleus. It catalyses the reaction L-seryl-[protein] + ATP = O-phospho-L-seryl-[protein] + ADP + H(+). It carries out the reaction L-threonyl-[protein] + ATP = O-phospho-L-threonyl-[protein] + ADP + H(+). Functionally, plays many key roles by phosphorylating several proteins including the viral DNA processivity factor BMRF1, EBNA1 or EBNA2. Modifies the host nuclear envelope structure and induces the redistribution of nuclear envelope-associated proteins by phosphorylating host nucleoporins. Subsequently, promotes the nuclear transport of EBV lytic proteins. Required for efficient lytic DNA replication and release of nucleocapsids from the nucleus. Contributes to the compaction of host cell chromatin in cells undergoing lytic replication, presumably by phosphorylating the host condensin complex and host TOP2A. Induces disassembly of the nuclear lamina by phosphorylating with host LMNA. Phosphorylates substrates involved in capsid assembly and DNA packaging. Facilitates the switch from latent to lytic DNA replication by down-regulating EBNA1 replication function. Phosphorylates the viral immediate-early protein BZLF1 and inhibits its sumoylation by interacting with host SUMO1 and SUMO2. Phosphorylates also host SAMHD1 and thereby counteracts its antiviral effect by reducing its dNTP hydrolase activity. This chain is Serine/threonine-protein kinase BGLF4, found in Epstein-Barr virus (strain AG876) (HHV-4).